The following is a 906-amino-acid chain: Cadherin-2 (906 aa).

Positions 1–25 are cleaved as a signal peptide; sequence MCRIAGAPRTLLPLLAALLQASVEA. The propeptide occupies 26–159; the sequence is SGEIALCKTG…HSGALQRQKR (134 aa). 5 Cadherin domains span residues 160-267, 268-382, 383-497, 498-603, and 604-717; these read DWVI…RPEF, LHQV…PPEF, TAMT…NPYF, APNP…DNAP, and QVLP…RIVG. Over 160–724 the chain is Extracellular; the sequence is DWVIPPINLP…IVGAGLGTGA (565 aa). Glutamate 170 lines the Ca(2+) pocket. A glycan (N-linked (GlcNAc...) asparagine) is linked at asparagine 190. The Ca(2+) site is built by aspartate 226, glutamate 228, aspartate 259, methionine 260, asparagine 261, aspartate 262, and asparagine 263. N-linked (GlcNAc...) asparagine glycosylation occurs at asparagine 273. The Ca(2+) site is built by aspartate 293, aspartate 295, and asparagine 301. N-linked (GlcNAc...) asparagine glycosylation is present at asparagine 325. Residue aspartate 353 participates in Ca(2+) binding. N-linked (GlcNAc...) asparagine glycans are attached at residues asparagine 402, asparagine 572, asparagine 651, and asparagine 692. Residues 725-745 form a helical membrane-spanning segment; it reads IIAILLCIIILLILVLMFVVW. Residues 746–906 are Cytoplasmic-facing; that stretch reads MKRRDKERQA…LADMYGGGDD (161 aa). Low complexity predominate over residues 863–880; sequence SGSTAGSLSSLNSSSSGG. The interval 863–883 is disordered; that stretch reads SGSTAGSLSSLNSSSSGGDQD.

In terms of assembly, homodimer (via extracellular region). Can also form heterodimers with other cadherins (via extracellular region). Dimerization occurs in trans, i.e. with a cadherin chain from another cell. Interacts with CDCP1. Interacts with PCDH8; this complex may also include TAOK2. The interaction with PCDH8 may lead to internalization through TAOK2/p38 MAPK pathway. Identified in a complex containing FGFR4, NCAM1, CDH2, PLCG1, FRS2, SRC, SHC1, GAP43 and CTTN. May interact with OBSCN (via protein kinase domain 2). Interacts with FBXO45. Cleaved by MMP24. Ectodomain cleavage leads to the generation of a soluble 90 kDa N-terminal soluble fragment and a 45 kDa membrane-bound C-terminal fragment 1 (CTF1), which is further cleaved by gamma-secretase into a 35 kDa. Cleavage in neural stem cells by MMP24 affects CDH2-mediated anchorage of neural stem cells to ependymocytes in the adult subependymal zone, leading to modulate neural stem cell quiescence. In terms of processing, may be phosphorylated by OBSCN. Post-translationally, O-glycosylated on Ser and Thr residues. As to expression, expressed in cardiac muscle (at protein level).

The protein localises to the cell membrane. It localises to the sarcolemma. The protein resides in the cell junction. It is found in the adherens junction. Its subcellular location is the desmosome. The protein localises to the cell surface. Functionally, calcium-dependent cell adhesion protein; preferentially mediates homotypic cell-cell adhesion by dimerization with a CDH2 chain from another cell. Cadherins may thus contribute to the sorting of heterogeneous cell types. Acts as a regulator of neural stem cells quiescence by mediating anchorage of neural stem cells to ependymocytes in the adult subependymal zone: upon cleavage by MMP24, CDH2-mediated anchorage is affected, leading to modulate neural stem cell quiescence. Plays a role in cell-to-cell junction formation between pancreatic beta cells and neural crest stem (NCS) cells, promoting the formation of processes by NCS cells. Required for proper neurite branching. Required for pre- and postsynaptic organization. CDH2 may be involved in neuronal recognition mechanism. In hippocampal neurons, may regulate dendritic spine density. This chain is Cadherin-2 (Cdh2), found in Mus musculus (Mouse).